Here is a 198-residue protein sequence, read N- to C-terminus: ATP-dependent Clp protease proteolytic subunit (198 aa).

Ser-98 serves as the catalytic Nucleophile. His-123 is a catalytic residue.

This sequence belongs to the peptidase S14 family. As to quaternary structure, fourteen ClpP subunits assemble into 2 heptameric rings which stack back to back to give a disk-like structure with a central cavity, resembling the structure of eukaryotic proteasomes.

The protein resides in the cytoplasm. It carries out the reaction Hydrolysis of proteins to small peptides in the presence of ATP and magnesium. alpha-casein is the usual test substrate. In the absence of ATP, only oligopeptides shorter than five residues are hydrolyzed (such as succinyl-Leu-Tyr-|-NHMec, and Leu-Tyr-Leu-|-Tyr-Trp, in which cleavage of the -Tyr-|-Leu- and -Tyr-|-Trp bonds also occurs).. Cleaves peptides in various proteins in a process that requires ATP hydrolysis. Has a chymotrypsin-like activity. Plays a major role in the degradation of misfolded proteins. The sequence is that of ATP-dependent Clp protease proteolytic subunit from Bacillus velezensis (strain DSM 23117 / BGSC 10A6 / LMG 26770 / FZB42) (Bacillus amyloliquefaciens subsp. plantarum).